Reading from the N-terminus, the 67-residue chain is Probable pilin MJ1400 (67 aa).

The propeptide occupies 1–13 (MKFIMKFIKSNKG). The short motif at 14–22 (QISLEFSLL) is the QXSXEXXXL element.

In terms of processing, the N-terminus is cleaved by the prepilin peptidase EppA, which recognizes the class III signal sequence.

It is found in the secreted. The protein localises to the cell surface. It localises to the fimbrium. This Methanocaldococcus jannaschii (strain ATCC 43067 / DSM 2661 / JAL-1 / JCM 10045 / NBRC 100440) (Methanococcus jannaschii) protein is Probable pilin MJ1400.